A 419-amino-acid polypeptide reads, in one-letter code: UDP-N-acetylglucosamine 1-carboxyvinyltransferase (419 aa).

22–23 (KN) serves as a coordination point for phosphoenolpyruvate. Arginine 92 provides a ligand contact to UDP-N-acetyl-alpha-D-glucosamine. Catalysis depends on cysteine 116, which acts as the Proton donor. 2-(S-cysteinyl)pyruvic acid O-phosphothioketal is present on cysteine 116. Residues 121-125 (RPIDQ), aspartate 305, and isoleucine 327 contribute to the UDP-N-acetyl-alpha-D-glucosamine site.

This sequence belongs to the EPSP synthase family. MurA subfamily.

The protein localises to the cytoplasm. The enzyme catalyses phosphoenolpyruvate + UDP-N-acetyl-alpha-D-glucosamine = UDP-N-acetyl-3-O-(1-carboxyvinyl)-alpha-D-glucosamine + phosphate. It participates in cell wall biogenesis; peptidoglycan biosynthesis. Functionally, cell wall formation. Adds enolpyruvyl to UDP-N-acetylglucosamine. The chain is UDP-N-acetylglucosamine 1-carboxyvinyltransferase from Trichlorobacter lovleyi (strain ATCC BAA-1151 / DSM 17278 / SZ) (Geobacter lovleyi).